The following is a 596-amino-acid chain: MGSVSSLISGHSFHSKHCRASQYKLRKSSHLKKLNRYSDGLLRFGFSQDSGHGKSSSKMGKSEDFFYIKVSQKARGSHHPDYTALSSGDLGGQAGVDFDPSTPPKLMPFSNQLEMGSEKGAVRPTAFKPVLPRSGAILHSSPESASHQLHPAPPDKPKEQELKPGLCSGALSDSGRNSMSSLPTHSTSSSYQLDPLVTPVGPTSRFGGSAHNITQGIVLQDSNMMSLKALSFSDGGSKLGHSNKADKGPSCVRSPISTDECSIQELEQKLLEREGALQKLQRSFEEKELASSLAYEERPRRCRDELEGPEPKGGNKLKQASQKSQRAQQVLHLQVLQLQQEKRQLRQELESLMKEQDLLETKLRSYEREKTSFGPALEETQWEVCQKSGEISLLKQQLKESQTEVNAKASEILGLKAQLKDTRGKLEGLELRTQDLEGALRTKGLELEVCENELQRKKNEAELLREKVNLLEQELQELRAQAALARDMGPPTFPEDVPALQRELERLRAELREERQGHDQMSSGFQHERLVWKEEKEKVIQYQKQLQQSYVAMYQRNQRLEKALQQLARGDSAGEPLEVDLEGADIPYEDIIATEI.

A lipid anchor (N-myristoyl glycine) is attached at Gly2. 2 disordered regions span residues 136-193 (AILH…SYQL) and 295-324 (YEER…SQKS). The segment covering 153–162 (PPDKPKEQEL) has biased composition (basic and acidic residues). Over residues 178–190 (SMSSLPTHSTSSS) the composition is skewed to low complexity. The stretch at 256–374 (ISTDECSIQE…SYEREKTSFG (119 aa)) forms a coiled coil. A compositionally biased stretch (basic and acidic residues) spans 295-310 (YEERPRRCRDELEGPE).

Belongs to the LZTS family. As to quaternary structure, binds EEF1G, TLK2 and CDK1. Phosphorylated on serine residues. Hyperphosphorylated by the cAMP-dependent kinase PKA during cell-cycle progression. As to expression, highly expressed in testis, prostate, spleen, thymus, ovary and brain. Detected at lower levels in heart, placenta, small intestine, colon, liver, kidney, skeletal muscle and pancreas. Not detectable in primary tumors from breast and prostate and in many cancer cell lines.

It localises to the cytoplasm. It is found in the cell membrane. The protein resides in the cell projection. The protein localises to the dendritic spine. Its subcellular location is the postsynaptic density. It localises to the synapse. Involved in the regulation of cell growth. May stabilize the active CDC2-cyclin B1 complex and thereby contribute to the regulation of the cell cycle and the prevention of uncontrolled cell proliferation. May act as a tumor suppressor. The polypeptide is Leucine zipper putative tumor suppressor 1 (LZTS1) (Homo sapiens (Human)).